The sequence spans 233 residues: Large ribosomal subunit protein uL3 (233 aa).

This sequence belongs to the universal ribosomal protein uL3 family. In terms of assembly, part of the 50S ribosomal subunit. Forms a cluster with proteins L14 and L19.

Functionally, one of the primary rRNA binding proteins, it binds directly near the 3'-end of the 23S rRNA, where it nucleates assembly of the 50S subunit. The protein is Large ribosomal subunit protein uL3 of Ureaplasma parvum serovar 3 (strain ATCC 27815 / 27 / NCTC 11736).